The primary structure comprises 72 residues: Translation initiation factor IF-1 (72 aa).

The region spanning 1 to 72 (MAKEETIQMQ…SRARITFRAK (72 aa)) is the S1-like domain.

The protein belongs to the IF-1 family. Component of the 30S ribosomal translation pre-initiation complex which assembles on the 30S ribosome in the order IF-2 and IF-3, IF-1 and N-formylmethionyl-tRNA(fMet); mRNA recruitment can occur at any time during PIC assembly.

It is found in the cytoplasm. Functionally, one of the essential components for the initiation of protein synthesis. Stabilizes the binding of IF-2 and IF-3 on the 30S subunit to which N-formylmethionyl-tRNA(fMet) subsequently binds. Helps modulate mRNA selection, yielding the 30S pre-initiation complex (PIC). Upon addition of the 50S ribosomal subunit IF-1, IF-2 and IF-3 are released leaving the mature 70S translation initiation complex. The sequence is that of Translation initiation factor IF-1 from Nitrosospira multiformis (strain ATCC 25196 / NCIMB 11849 / C 71).